The sequence spans 592 residues: Proline--tRNA ligase (592 aa).

It belongs to the class-II aminoacyl-tRNA synthetase family. ProS type 1 subfamily. As to quaternary structure, homodimer.

It localises to the cytoplasm. The catalysed reaction is tRNA(Pro) + L-proline + ATP = L-prolyl-tRNA(Pro) + AMP + diphosphate. Functionally, catalyzes the attachment of proline to tRNA(Pro) in a two-step reaction: proline is first activated by ATP to form Pro-AMP and then transferred to the acceptor end of tRNA(Pro). As ProRS can inadvertently accommodate and process non-cognate amino acids such as alanine and cysteine, to avoid such errors it has two additional distinct editing activities against alanine. One activity is designated as 'pretransfer' editing and involves the tRNA(Pro)-independent hydrolysis of activated Ala-AMP. The other activity is designated 'posttransfer' editing and involves deacylation of mischarged Ala-tRNA(Pro). The misacylated Cys-tRNA(Pro) is not edited by ProRS. The sequence is that of Proline--tRNA ligase from Corynebacterium urealyticum (strain ATCC 43042 / DSM 7109).